Reading from the N-terminus, the 332-residue chain is FAD-dependent monooxygenase elcE (332 aa).

Belongs to the oxygen-dependent FAD-linked oxidoreductase family.

It functions in the pathway secondary metabolite biosynthesis. Its function is as follows. FAD-dependent monooxygenase; part of the gene cluster that mediates the biosynthesis of elsinochrome C, a perelyenequinone phytotoxin structurally similar to cercosporin. The first step of elsinochrome C biosynthesis is performed by the polyketide synthase elcA which catalyzes the formation of nor-toralactone. The starter unit acyltransferase (SAT) domain of elcA initiates polyketide extension by the selective utilization of acetyl-CoA, which is elongated to the heptaketide in the beta-ketoacyl synthase (KS) domain by successive condensations with six malonyl units introduced by the malonyl acyltransferase (MAT) domain. The product template (PT) domain catalyzes C4-C9 and C2-C11 aldol cyclizations and dehydrations to a trihydroxynaphthalene, which is thought to be delivered to the thioesterase (TE) domain for product release. The bifunctional enzyme elcB then methylates nor-toralactone to toralactone before conducting an unusual oxidative aromatic ring opening. The next step in perylenequinone biosynthesis is an O-methylation at the nascent OH-6 of the elcB product performed by the O-methyltransferase elcD. The oxidative coupling of the two monomeric naphthol units in perylenequinone biosynthesis is catalyzed by the FAD-dependent monooxygenase elcE and the multicopper oxidase elcG. ElcG might catalyze the first intermolecular coupling in a regio- and stereo-selective manner via a phenol radical coupling mechanism and the elcE could forge the second C-C bond intramolecularly via a hydride transfer mechanism. The fasciclin domain-containing protein elcF might also play a role duting this step. The last piece of the puzzle in the biosynthesis of elsinochrome C is the additional annulation by enolate coupling to afford the dihydrobenzo(ghi)perylenequinone system, catalyzed by the FAD-dependent monooxygenase elcH. This chain is FAD-dependent monooxygenase elcE, found in Phaeosphaeria nodorum (strain SN15 / ATCC MYA-4574 / FGSC 10173) (Glume blotch fungus).